Reading from the N-terminus, the 328-residue chain is MTTWFPGHMKTTLKRLRDSVSKNDVIVEVRDARIPLSSRNPALETLAANRKRVVVYNKCDLAFPSAGDLCKTRALNSVRAFEETYVETLARWETIQTLRRYVGTVSNVPECIKRLLQLLQKLTYSDHAASNRTVKVFVVGMPNVGKSSVMNALRHASLHRRKVAVVGSHPGVTRNVGEVVRLFEGKNVYMVDTPGIMLPTILQPEDAIKFALVHAMKDGRLHNAVVVDYLLYRLNLIDPNTYTRLSSPTNDVSTFLHNAAVHTGKLGKGGTVNDDLIASYVLQLYRTGFFGAFVLDSMEEEQWQQRLALEKNLVRRNQRRVCSTRKKA.

One can recognise a CP-type G domain in the interval Lys10 to Pro199. GTP is bound by residues Asn57–Asp60, Asn143–Ser148, and Gly195.

Belongs to the TRAFAC class YlqF/YawG GTPase family. MTG1 subfamily.

It is found in the mitochondrion inner membrane. In terms of biological role, mitochondrial GTPase involved in assembly of the large ribosomal subunit. Plays a role in expression of the mitochondrial translational machinery. This is Mitochondrial GTPase 1 from Schizosaccharomyces japonicus (strain yFS275 / FY16936) (Fission yeast).